We begin with the raw amino-acid sequence, 194 residues long: Small COPII coat GTPase SAR1B (194 aa).

Positions 2–4 (FLV) match the STAR; SAR1-N-terminal activation recruitment. Required for the activation and subsequent recruitment to ER membrane motif. The segment at 10–14 (MFLWL) is mediates recruitment to ER membranes. 6 residues coordinate GDP: asparagine 30, alanine 31, glycine 32, lysine 33, threonine 34, and threonine 35. Asparagine 30 is a GTP binding site. The GTP site is built by glycine 32, lysine 33, threonine 34, and threonine 35. Aspartate 70 is a binding site for Mg(2+). Residues lysine 131, aspartate 133, and isoleucine 172 each contribute to the GDP site. Lysine 131, aspartate 133, and isoleucine 172 together coordinate GTP.

This sequence belongs to the small GTPase superfamily. SAR1 family. Homodimer; upon association with membrane. Part of the coat protein complex II/COPII, composed of SEC23/24 and SEC13/31 heterodimers, that it helps recruit and assemble on endoplasmic reticulum (ER) membranes at ER exit sites.

It is found in the endoplasmic reticulum membrane. It localises to the golgi apparatus. The protein localises to the golgi stack membrane. Its subcellular location is the cytoplasm. The protein resides in the cytosol. The enzyme catalyses GTP + H2O = GDP + phosphate + H(+). With respect to regulation, small GTPases activation is mediated by guanine exchange factors (GEF), while inactivation through hydrolysis of the bound GTP is stimulated by GTPase activating proteins (GAP). In terms of biological role, small GTPase that cycles between an active GTP-bound and an inactive GDP-bound state and mainly functions in vesicle-mediated endoplasmic reticulum (ER) to Golgi transport. The active GTP-bound form inserts into the endoplasmic reticulum membrane where it recruits the remainder of the coat protein complex II/COPII. The coat protein complex II assembling and polymerizing on endoplasmic reticulum membrane is responsible for both the sorting of cargos and the deformation and budding of membranes into vesicles destined to the Golgi. The sequence is that of Small COPII coat GTPase SAR1B (sarB) from Dictyostelium discoideum (Social amoeba).